We begin with the raw amino-acid sequence, 254 residues long: Glycerol operon regulatory protein (254 aa).

The HTH iclR-type domain occupies 5–67; sequence IQSLERAAAM…DASGRYQLGA (63 aa). The H-T-H motif DNA-binding region spans 27–46; the sequence is LSDIASSLGLAKGTAHGILR. Positions 82-251 constitute an IclR-ED domain; that stretch reads LRARALVWTD…ARAVSRDLGA (170 aa).

May be an activator protein for the gylABX operon. This Streptomyces coelicolor (strain ATCC BAA-471 / A3(2) / M145) protein is Glycerol operon regulatory protein (gylR).